The following is a 181-amino-acid chain: Protein CENTRORADIALIS (181 aa).

This sequence belongs to the phosphatidylethanolamine-binding protein family. In terms of assembly, may form homodimers in solution.

It localises to the cytoplasm. Expression of CEN leads to a morphological switch between shoot growth and the development of flower structures (inflorescence). May form complexes with phosphorylated ligands by interfering with kinases and their effectors. The chain is Protein CENTRORADIALIS (CEN) from Antirrhinum majus (Garden snapdragon).